We begin with the raw amino-acid sequence, 348 residues long: MDENKQKALAAALGQIEKQFGKGSIMRLGDNRTMDVETISTGSLSLDIALGAGGLPMGRIVEVYGPESSGKTTLTLELIAAAQRVGKTCAFIDAEHALDPIYAKKLGVNIDELLVSQPDTGEQALEICDALARSGAIDVIVIDSVAALTPKAEIEGEMGDSHMGLQARMLSQAMRKLTGNLKQSNCMCIFINQIRMKIGVMFGNPETTTGGNALKFYASVRLDIRRTGSIKEGDEAVGNETRIKVVKNKIAAPFKQADTQILYGQGFNREGELVDLGVKHKLVEKAGAWYSYNGDKIGQGKANACKFLRENPAAAMALDTKLREMLLNPAELIVEEPILSEMPQEEEL.

65 to 72 (GPESSGKT) is a binding site for ATP.

The protein belongs to the RecA family.

The protein localises to the cytoplasm. Its function is as follows. Can catalyze the hydrolysis of ATP in the presence of single-stranded DNA, the ATP-dependent uptake of single-stranded DNA by duplex DNA, and the ATP-dependent hybridization of homologous single-stranded DNAs. It interacts with LexA causing its activation and leading to its autocatalytic cleavage. This Vibrio anguillarum (Listonella anguillarum) protein is Protein RecA.